The chain runs to 388 residues: Succinate--CoA ligase [ADP-forming] subunit beta (388 aa).

An ATP-grasp domain is found at 9 to 244 (KQLFARYGLP…HSQEDEREAH (236 aa)). Residues lysine 46, 53 to 55 (GRG), glutamate 99, threonine 102, and glutamate 107 contribute to the ATP site. Positions 199 and 213 each coordinate Mg(2+). Residues asparagine 264 and 321–323 (GIV) contribute to the substrate site.

It belongs to the succinate/malate CoA ligase beta subunit family. Heterotetramer of two alpha and two beta subunits. Mg(2+) is required as a cofactor.

It catalyses the reaction succinate + ATP + CoA = succinyl-CoA + ADP + phosphate. It carries out the reaction GTP + succinate + CoA = succinyl-CoA + GDP + phosphate. Its pathway is carbohydrate metabolism; tricarboxylic acid cycle; succinate from succinyl-CoA (ligase route): step 1/1. In terms of biological role, succinyl-CoA synthetase functions in the citric acid cycle (TCA), coupling the hydrolysis of succinyl-CoA to the synthesis of either ATP or GTP and thus represents the only step of substrate-level phosphorylation in the TCA. The beta subunit provides nucleotide specificity of the enzyme and binds the substrate succinate, while the binding sites for coenzyme A and phosphate are found in the alpha subunit. This is Succinate--CoA ligase [ADP-forming] subunit beta from Sodalis glossinidius (strain morsitans).